Consider the following 556-residue polypeptide: Sphingomyelinase C (556 aa).

An N-terminal signal peptide occupies residues 1–27; sequence MRIKKYTKVRLLVNCCLLLFFLIDCGA.

The protein localises to the secreted. The enzyme catalyses a sphingomyelin + H2O = phosphocholine + an N-acylsphing-4-enine + H(+). In Leptospira interrogans, this protein is Sphingomyelinase C (sph).